Consider the following 711-residue polypeptide: Polyribonucleotide nucleotidyltransferase (711 aa).

Residues Asp486 and Asp492 each contribute to the Mg(2+) site. The region spanning 553-612 (PRIHTIKINPDKIKDVIGKGGSVIRALTEETGTTIEIEDDGTVKIAATDGEKAKNAIRRI) is the KH domain. The 69-residue stretch at 622–690 (GRVYNGKVTR…RQGRIRLSIK (69 aa)) folds into the S1 motif domain. Residues 689–711 (IKEATEQSQPAAAPEAPAAEQGE) are disordered. Low complexity predominate over residues 694–711 (EQSQPAAAPEAPAAEQGE).

The protein belongs to the polyribonucleotide nucleotidyltransferase family. As to quaternary structure, component of the RNA degradosome, which is a multiprotein complex involved in RNA processing and mRNA degradation. Mg(2+) serves as cofactor.

It is found in the cytoplasm. The catalysed reaction is RNA(n+1) + phosphate = RNA(n) + a ribonucleoside 5'-diphosphate. Functionally, involved in mRNA degradation. Catalyzes the phosphorolysis of single-stranded polyribonucleotides processively in the 3'- to 5'-direction. The chain is Polyribonucleotide nucleotidyltransferase from Escherichia fergusonii (strain ATCC 35469 / DSM 13698 / CCUG 18766 / IAM 14443 / JCM 21226 / LMG 7866 / NBRC 102419 / NCTC 12128 / CDC 0568-73).